Reading from the N-terminus, the 114-residue chain is Macrophage migration inhibitory factor homolog (114 aa).

The Proton acceptor; via imino nitrogen role is filled by proline 2. Lysine 33 and asparagine 98 together coordinate substrate.

This sequence belongs to the MIF family.

It localises to the secreted. It catalyses the reaction L-dopachrome = 5,6-dihydroxyindole-2-carboxylate. The catalysed reaction is 3-phenylpyruvate = enol-phenylpyruvate. In terms of biological role, tautomerization of the methyl ester of L-dopachrome. Inhibits migration of human peripheral blood mononuclear cells. This chain is Macrophage migration inhibitory factor homolog, found in Trichuris trichiura (Whipworm).